The primary structure comprises 400 residues: Formate-dependent phosphoribosylglycinamide formyltransferase (400 aa).

N(1)-(5-phospho-beta-D-ribosyl)glycinamide is bound by residues 22–23 (EL) and Glu-82. ATP contacts are provided by residues Arg-115, Lys-156, 161–166 (SSGKGQ), 196–199 (EGFI), and Glu-204. Residues 120–309 (RLAAETLGLP…EFALHARAIL (190 aa)) form the ATP-grasp domain. Positions 268 and 280 each coordinate Mg(2+). Residues Asp-287, Lys-361, and 368–369 (RR) contribute to the N(1)-(5-phospho-beta-D-ribosyl)glycinamide site.

The protein belongs to the PurK/PurT family. Homodimer.

It catalyses the reaction N(1)-(5-phospho-beta-D-ribosyl)glycinamide + formate + ATP = N(2)-formyl-N(1)-(5-phospho-beta-D-ribosyl)glycinamide + ADP + phosphate + H(+). It participates in purine metabolism; IMP biosynthesis via de novo pathway; N(2)-formyl-N(1)-(5-phospho-D-ribosyl)glycinamide from N(1)-(5-phospho-D-ribosyl)glycinamide (formate route): step 1/1. Functionally, involved in the de novo purine biosynthesis. Catalyzes the transfer of formate to 5-phospho-ribosyl-glycinamide (GAR), producing 5-phospho-ribosyl-N-formylglycinamide (FGAR). Formate is provided by PurU via hydrolysis of 10-formyl-tetrahydrofolate. This chain is Formate-dependent phosphoribosylglycinamide formyltransferase, found in Xanthomonas axonopodis pv. citri (strain 306).